The primary structure comprises 210 residues: Cilia- and flagella-associated protein 418 (210 aa).

The interval 1–77 (MAKDLDELLD…LINEIFEEPN (77 aa)) is required for interaction with FAM161A. The disordered stretch occupies residues 24–59 (LDLGERPKGGSGGGGTHSGDRNGAQEKDTLRSTETF). Residues 41–59 (SGDRNGAQEKDTLRSTETF) show a composition bias toward basic and acidic residues.

Interacts (via N-terminus) with FAM161A (via central region); the interaction is direct.

The protein localises to the cytoplasm. Its subcellular location is the photoreceptor inner segment. In terms of biological role, may be involved in photoreceptor outer segment disk morphogenesis. In Rattus norvegicus (Rat), this protein is Cilia- and flagella-associated protein 418.